The sequence spans 339 residues: DnaJ homolog subfamily C member 22 (339 aa).

Positions 4–50 constitute a TM2 domain; the sequence is GLLMTYVLWALGGPVGLHHLYLGRDSHALLWMLTLGGGGLGWLWEFW. 7 helical membrane-spanning segments follow: residues 5-25, 30-50, 81-101, 105-125, 135-155, 185-205, and 218-238; these read LLMT…HLYL, HALL…WEFW, FASQ…SLSS, FYIV…AAVG, LGAA…ILPI, VGLA…YNTA, and FLSW…VLLL. The region spanning 277 to 339 is the J domain; it reads LAHQVLGVPE…LSQPKKPRAS (63 aa).

The protein resides in the membrane. Its function is as follows. May function as a co-chaperone. This is DnaJ homolog subfamily C member 22 (Dnajc22) from Mus musculus (Mouse).